The sequence spans 662 residues: F-box/WD repeat-containing protein pof10 (662 aa).

The segment covering 1–16 (MKSEPTSLDFTSSNLR) has biased composition (polar residues). Residues 1 to 27 (MKSEPTSLDFTSSNLRRMNRDHSSNNT) are disordered. An F-box domain is found at 28–74 (NRTVLNLPKEILIIIFSFLDPRSLLSAQCTCKYWKKLLSDDLSWRTA). WD repeat units lie at residues 215–260 (SHAD…SLQS), 263–302 (FRSSQILSLCFRPKYKMLLVDTFNYELNSYQLYLIPGYAR), and 429–468 (TAYSNFPITDIYLNEVAMVVGSASGYCGVYDTVTGNFLKK). A UIM 1 domain is found at 581-600 (SEEEIIAYVTMLSQEEEAKR). Positions 617-645 (ENDEQATSSLNALSSNHEPPQEQANVAEL) are disordered. The span at 621 to 640 (QATSSLNALSSNHEPPQEQA) shows a compositional bias: polar residues. In terms of domain architecture, UIM 2 spans 646–662 (NEQEQIELAMRLSLMEM).

In terms of assembly, part of a SCF (SKP1-cullin-F-box) protein ligase complex. Interacts with skp1.

The protein resides in the cytoplasm. In terms of biological role, probably recognizes and binds to some phosphorylated proteins and promotes their ubiquitination and degradation. This chain is F-box/WD repeat-containing protein pof10 (pof10), found in Schizosaccharomyces pombe (strain 972 / ATCC 24843) (Fission yeast).